The following is a 383-amino-acid chain: ATP phosphoribosyltransferase regulatory subunit (383 aa).

Belongs to the class-II aminoacyl-tRNA synthetase family. HisZ subfamily. In terms of assembly, heteromultimer composed of HisG and HisZ subunits.

It is found in the cytoplasm. Its pathway is amino-acid biosynthesis; L-histidine biosynthesis; L-histidine from 5-phospho-alpha-D-ribose 1-diphosphate: step 1/9. In terms of biological role, required for the first step of histidine biosynthesis. May allow the feedback regulation of ATP phosphoribosyltransferase activity by histidine. The sequence is that of ATP phosphoribosyltransferase regulatory subunit from Cupriavidus taiwanensis (strain DSM 17343 / BCRC 17206 / CCUG 44338 / CIP 107171 / LMG 19424 / R1) (Ralstonia taiwanensis (strain LMG 19424)).